Consider the following 1127-residue polypeptide: MALKHQLNHAVEDNLGSKAPIGPCGFIYIYPETHFNFKEISLLGDKYAEAGAFSLPLLHGVTVEEAFVPNVKAVYKKIDMTTVSVKLSTFYNRAIIFHNVEKFESIFSGPGLGSLCKEACDLFGYVPFTPLGEGSTDVSDICPPVWQEKDAIMAVVITEGFKERLHLGKLIYLKSQMHSVMINKTEVYRIPLYDEDLFTKKSSLRRLYLPAVSEYLYYTLYTSLAQSLRVHNAASLVEAIQEQFVHDKYKMAKLVSFKEYPLATVGACDTTLMVIDAVAAELGLSYSLSFFEAPQEKTKVQDYYSWDIFASCETDSDRLEALSKWNALQAIHIHAQLFSTNSIYYVNRVARQAPIPNSKVEPNVYNSYYLQHGLANLCEETLFEDGSPAFTGAPASSLDGSSFTLQHLAYAAAFSPNLLARMCYYLQFCQHQKSTLNPAYNITEYVGSAANSPVCSLCSGQCPCVCINTLFYRLKDRFPPVLQGSRRDPYVITGITNVFNELDFLGNFASFRDKDEDQNQTEETPRYTYWQLNQTLTEKLEAAGLVDSPVADEGAGGSGSMNLEKFVRTFSDIDSLVDAEAAKFINTMIKNNVNFKESIKGVSHVIQYNCNTYWQAPCSLMLNLYYRSILTIIQDIALPISTVYESENPAQGYKPNEWLKLHYQTLWTNFKSFFIDKGVITGTEMKVVHAEQFSDFFDVDAATNNMYSPVKVQVRLARAQVLALKNIKVKNRILFSGTSMSEHYQNAFLKTANRRDNYILAGPYVKFLNSFHRQLFPNLKISCLYLWSNFCKKKQIPCVPGVSAEALNKFFSYINNNSKQFEEVNMLDVVPDSYVTYAKQRLNNAILRACGQTQFYAVTIHSIFPKVQETCALEYPHVLGTSSVDSVEDYVNNVQNLKALTVNSSLRESAANLARSRPIVTLPVVVNKYTGIAGNAQLFQSANLGYFMGRGVDKNLLGDSLFVKKQQNSYMRKKYLFMTPLVGNLLKPSYTHQGTAFEIETVKRTIQSILEDQADEDVLNRVVCELVKSLGAGCADLTLDDIQFYLGSYGMFSENILEKLDQLRELVGPWTHEWAESVLKSGTCETDEVQFVAFEEEQVKLTSMDHSGKVVGGKKRKIATMFDDLDL.

Residues 1098 to 1127 (QVKLTSMDHSGKVVGGKKRKIATMFDDLDL) form a required for nuclear localization region.

The protein belongs to the herpesviridae major DNA-binding protein family. Homooligomers. Forms double-helical filaments necessary for the formation of replication compartments within the host nucleus. Interacts with the origin-binding protein. Interacts with the helicase primase complex; this interaction stimulates primer synthesis activity of the helicase-primase complex. Interacts with the DNA polymerase. Interacts with the alkaline exonuclease; this interaction increases its nuclease processivity.

It is found in the host nucleus. In terms of biological role, plays several crucial roles in viral infection. Participates in the opening of the viral DNA origin to initiate replication by interacting with the origin-binding protein. May disrupt loops, hairpins and other secondary structures present on ssDNA to reduce and eliminate pausing of viral DNA polymerase at specific sites during elongation. Promotes viral DNA recombination by performing strand-transfer, characterized by the ability to transfer a DNA strand from a linear duplex to a complementary single-stranded DNA circle. Can also catalyze the renaturation of complementary single strands. Additionally, reorganizes the host cell nucleus, leading to the formation of prereplicative sites and replication compartments. This process is driven by the protein which can form double-helical filaments in the absence of DNA. This is Major DNA-binding protein from Alcelaphine herpesvirus 1 (strain C500) (AlHV-1).